Consider the following 152-residue polypeptide: UPF0336 protein Tfu_2666 (152 aa).

The MaoC-like domain occupies 7-116 (YLGRAYELPE…TTITDIKSLA (110 aa)).

Belongs to the UPF0336 family.

The polypeptide is UPF0336 protein Tfu_2666 (Thermobifida fusca (strain YX)).